Reading from the N-terminus, the 389-residue chain is uncharacterized protein (389 aa).

The first 29 residues, Met-1–Ala-29, serve as a signal peptide directing secretion.

Belongs to the bacterial solute-binding protein 1 family. WtpA subfamily.

This is an uncharacterized protein from Thermoplasma volcanium (strain ATCC 51530 / DSM 4299 / JCM 9571 / NBRC 15438 / GSS1).